The primary structure comprises 406 residues: Digeranylgeranylglycerophospholipid reductase 2 (406 aa).

The FAD site is built by Gly15, Glu34, Cys45, Ala46, Gly48, Arg99, Ala123, Asp279, Gly291, and Ile292.

It belongs to the geranylgeranyl reductase family. DGGGPL reductase subfamily. FAD serves as cofactor.

The enzyme catalyses a 2,3-bis-O-phytanyl-sn-glycerol 1-phospholipid + 8 oxidized 2[4Fe-4S]-[ferredoxin] = a 2,3-bis-O-(geranylgeranyl)-sn-glycerol 1-phospholipid + 8 reduced 2[4Fe-4S]-[ferredoxin] + 16 H(+). It catalyses the reaction 2,3-bis-O-(phytanyl)-sn-glycerol 1-phosphate + 8 oxidized 2[4Fe-4S]-[ferredoxin] = 2,3-bis-O-(geranylgeranyl)-sn-glycerol 1-phosphate + 8 reduced 2[4Fe-4S]-[ferredoxin] + 16 H(+). It carries out the reaction a 2,3-bis-O-phytanyl-sn-glycerol 1-phospholipid + 8 A = a 2,3-bis-O-(geranylgeranyl)-sn-glycerol 1-phospholipid + 8 AH2. The catalysed reaction is CDP-2,3-bis-O-(geranylgeranyl)-sn-glycerol + 8 AH2 = CDP-2,3-bis-O-(phytanyl)-sn-glycerol + 8 A. The enzyme catalyses archaetidylserine + 8 AH2 = 2,3-bis-O-phytanyl-sn-glycero-3-phospho-L-serine + 8 A. The protein operates within membrane lipid metabolism; glycerophospholipid metabolism. Functionally, is involved in the reduction of 2,3-digeranylgeranylglycerophospholipids (unsaturated archaeols) into 2,3-diphytanylglycerophospholipids (saturated archaeols) in the biosynthesis of archaeal membrane lipids. Catalyzes the formation of archaetidic acid (2,3-di-O-phytanyl-sn-glyceryl phosphate) from 2,3-di-O-geranylgeranylglyceryl phosphate (DGGGP) via the hydrogenation of each double bond of the isoprenoid chains. Is also probably able to reduce double bonds of geranyl groups in CDP-2,3-bis-O-(geranylgeranyl)-sn-glycerol and archaetidylserine, thus acting at various stages in the biosynthesis of archaeal membrane lipids. This is Digeranylgeranylglycerophospholipid reductase 2 from Methanococcoides burtonii (strain DSM 6242 / NBRC 107633 / OCM 468 / ACE-M).